The following is a 498-amino-acid chain: ATP synthase subunit beta, chloroplastic (498 aa).

Residue 172 to 179 (GGAGVGKT) participates in ATP binding.

This sequence belongs to the ATPase alpha/beta chains family. F-type ATPases have 2 components, CF(1) - the catalytic core - and CF(0) - the membrane proton channel. CF(1) has five subunits: alpha(3), beta(3), gamma(1), delta(1), epsilon(1). CF(0) has four main subunits: a(1), b(1), b'(1) and c(9-12).

The protein localises to the plastid. It is found in the chloroplast thylakoid membrane. It catalyses the reaction ATP + H2O + 4 H(+)(in) = ADP + phosphate + 5 H(+)(out). In terms of biological role, produces ATP from ADP in the presence of a proton gradient across the membrane. The catalytic sites are hosted primarily by the beta subunits. This chain is ATP synthase subunit beta, chloroplastic, found in Buxus microphylla (Littleleaf boxwood).